The chain runs to 451 residues: Gamma-aminobutyric acid receptor subunit alpha-2 (451 aa).

The first 28 residues, 1 to 28 (MRTKLSTCNVWFPLLVLLVWNPARLVLA), serve as a signal peptide directing secretion. At 29-249 (NIQEDEAKNN…MTAHFHLKRK (221 aa)) the chain is on the extracellular side. Asn-38 carries an N-linked (GlcNAc...) asparagine glycan. Arg-94 contacts 4-aminobutanoate. Asn-114 and Asn-138 each carry an N-linked (GlcNAc...) asparagine glycan. Thr-157 contributes to the 4-aminobutanoate binding site. Cysteines 166 and 180 form a disulfide. A run of 3 helical transmembrane segments spans residues 250-270 (IGYFVIQTYLPCIMTVILSQV), 281-300 (ARTVFGVTTVLTMTTLSISA), and 312-332 (AMDWFIAVCYAFVFSALIEFA). The Cytoplasmic portion of the chain corresponds to 333–420 (TVNYFTKRGW…FNSVSKIDRM (88 aa)). Residues 389–408 (KSATTPEPNKKPENKPAEAK) are disordered. A compositionally biased stretch (basic and acidic residues) spans 396–408 (PNKKPENKPAEAK). A helical membrane pass occupies residues 421-441 (SRIVFPVLFGTFNLVYWATYL). Residues 442-451 (NREPVLGVSP) lie on the Extracellular side of the membrane.

This sequence belongs to the ligand-gated ion channel (TC 1.A.9) family. Gamma-aminobutyric acid receptor (TC 1.A.9.5) subfamily. GABRA2 sub-subfamily. As to quaternary structure, heteropentamer, formed by a combination of alpha (GABRA1-6), beta (GABRB1-3), gamma (GABRG1-3), delta (GABRD), epsilon (GABRE), rho (GABRR1-3), pi (GABRP) and theta (GABRQ) subunits, each subunit exhibiting distinct physiological and pharmacological properties. Binds UBQLN1. Interacts with KIF21B. Interacts with LHFPL4. Interacts with SHISA7; interaction leads to the regulation of GABA(A) receptor trafficking, channel deactivation kinetics and pharmacology. Glycosylated. Expressed in brain (at protein level).

The protein resides in the postsynaptic cell membrane. It is found in the cell membrane. The protein localises to the cytoplasmic vesicle membrane. Its subcellular location is the cell projection. It localises to the dendrite. It catalyses the reaction chloride(in) = chloride(out). Activated by pentobarbital. Inhibited by the antagonist bicuculline. Alpha subunit of the heteropentameric ligand-gated chloride channel gated by gamma-aminobutyric acid (GABA), a major inhibitory neurotransmitter in the brain. GABA-gated chloride channels, also named GABA(A) receptors (GABAAR), consist of five subunits arranged around a central pore and contain GABA active binding site(s) located at the alpha and beta subunit interface(s). When activated by GABA, GABAARs selectively allow the flow of chloride anions across the cell membrane down their electrochemical gradient. Chloride influx into the postsynaptic neuron following GABAAR opening decreases the neuron ability to generate a new action potential, thereby reducing nerve transmission. The alpha-2 subunit exhibits synaptogenic activity together with beta-2 and very little to no activity together with beta-3, the gamma-2 subunit being necessary but not sufficient to induce rapid synaptic contacts formation. This Rattus norvegicus (Rat) protein is Gamma-aminobutyric acid receptor subunit alpha-2.